Consider the following 66-residue polypeptide: Conotoxin Cl14.1b (66 aa).

The N-terminal stretch at 1–19 (MNVTVMFLVLLLTMPLTDG) is a signal peptide. A propeptide spanning residues 20-47 (FNIRAINGGELFGLVQRDAGNALDHGFY) is cleaved from the precursor.

This sequence belongs to the conotoxin L superfamily. In terms of processing, contains 2 disulfide bonds. As to expression, expressed by the venom duct.

It localises to the secreted. The polypeptide is Conotoxin Cl14.1b (Californiconus californicus (California cone)).